A 553-amino-acid polypeptide reads, in one-letter code: CTP synthase (553 aa).

The amidoligase domain stretch occupies residues 1–275 (MPTETEYDPS…DQYVMEQFDM (275 aa)). Serine 24 lines the CTP pocket. Serine 24 provides a ligand contact to UTP. 25–30 (GLGKGI) contributes to the ATP binding site. Position 65 (tyrosine 65) interacts with L-glutamine. Residue aspartate 82 participates in ATP binding. 2 residues coordinate Mg(2+): aspartate 82 and glutamate 150. CTP-binding positions include 157–159 (DIE), 196–201 (KTKPTQ), and lysine 232. UTP-binding positions include 196–201 (KTKPTQ) and lysine 232. The Glutamine amidotransferase type-1 domain maps to 308–540 (KYALEDAYMS…LDAVLERADV (233 aa)). Glycine 362 is a binding site for L-glutamine. The Nucleophile; for glutamine hydrolysis role is filled by cysteine 389. Residues 390 to 393 (LGFQ), glutamate 413, and arginine 470 contribute to the L-glutamine site. Residues histidine 513 and glutamate 515 contribute to the active site.

The protein belongs to the CTP synthase family. In terms of assembly, homotetramer.

The catalysed reaction is UTP + L-glutamine + ATP + H2O = CTP + L-glutamate + ADP + phosphate + 2 H(+). It catalyses the reaction L-glutamine + H2O = L-glutamate + NH4(+). The enzyme catalyses UTP + NH4(+) + ATP = CTP + ADP + phosphate + 2 H(+). The protein operates within pyrimidine metabolism; CTP biosynthesis via de novo pathway; CTP from UDP: step 2/2. With respect to regulation, allosterically activated by GTP, when glutamine is the substrate; GTP has no effect on the reaction when ammonia is the substrate. The allosteric effector GTP functions by stabilizing the protein conformation that binds the tetrahedral intermediate(s) formed during glutamine hydrolysis. Inhibited by the product CTP, via allosteric rather than competitive inhibition. Functionally, catalyzes the ATP-dependent amination of UTP to CTP with either L-glutamine or ammonia as the source of nitrogen. Regulates intracellular CTP levels through interactions with the four ribonucleotide triphosphates. The sequence is that of CTP synthase from Halobacterium salinarum (strain ATCC 29341 / DSM 671 / R1).